The following is a 373-amino-acid chain: Mitochondrial nicotinamide adenine dinucleotide transporter 1 (373 aa).

The Mitochondrial matrix portion of the chain corresponds to 1-80 (MTQTDNPVPN…WVPLSSTQIT (80 aa)). 3 Solcar repeats span residues 75–166 (SSTQ…SKKF), 174–263 (FDFV…LKVR), and 276–364 (INLQ…FRNR). A helical transmembrane segment spans residues 81-101 (ALSGAFAGFLSGVAVCPLDVA). Topologically, residues 102–141 (KTRLQAQGLQTRFENPYYRGIMGTLSTIVRDEGPRGLYKG) are mitochondrial intermembrane. Residues 142–162 (LVPIVLGYFPTWMIYFSVYEF) traverse the membrane as a helical segment. Topologically, residues 163–176 (SKKFFHGIFPQFDF) are mitochondrial matrix. Residues 177–199 (VAQSCAAITAGAASTTLTNPIWV) traverse the membrane as a helical segment. At 200-235 (VKTRLMLQSNLGEHPTHYKGTFDAFRKLFYQEGFKA) the chain is on the mitochondrial intermembrane side. A helical membrane pass occupies residues 236–256 (LYAGLVPSLLGLFHVAIHFPI). Over 257–280 (YEDLKVRFHCYSRENNTNSINLQR) the chain is Mitochondrial matrix. A helical transmembrane segment spans residues 281-297 (LIMASSVSKMIASAVTY). Topologically, residues 298-335 (PHEILRTRMQLKSDIPDSIQRRLFPLIKATYAQEGLKG) are mitochondrial intermembrane. A helical transmembrane segment spans residues 336 to 358 (FYSGFTTNLVRTIPASAITLVSF). Over 359–373 (EYFRNRLENISTMVI) the chain is Mitochondrial matrix.

This sequence belongs to the mitochondrial carrier (TC 2.A.29) family.

The protein localises to the mitochondrion inner membrane. It catalyses the reaction dAMP(in) + NAD(+)(out) = dAMP(out) + NAD(+)(in). The catalysed reaction is dGMP(in) + NAD(+)(out) = dGMP(out) + NAD(+)(in). The enzyme catalyses GMP(in) + NAD(+)(out) = GMP(out) + NAD(+)(in). It carries out the reaction AMP(in) + NAD(+)(out) = AMP(out) + NAD(+)(in). It catalyses the reaction deamido-NAD(+)(in) + NAD(+)(out) = deamido-NAD(+)(out) + NAD(+)(in). Functionally, mitochondrial inner membrane carrier protein that mediates the import of NAD(+) into mitochondria. Can transport NAD(+) by unidirectional transport or by exchange with intramitochondrially generated dAMP and dGMP. Also able to transport NAD(+) by exchange with AMP, GMP or deamido-NAD (+) in vitro. This chain is Mitochondrial nicotinamide adenine dinucleotide transporter 1 (YIA6), found in Saccharomyces cerevisiae (strain ATCC 204508 / S288c) (Baker's yeast).